The sequence spans 205 residues: Tegument protein UL51 homolog (205 aa).

The S-palmitoyl cysteine; by host moiety is linked to residue Cys4.

Belongs to the herpesviridae UL51 family. As to quaternary structure, oligomerizes. Interacts with U75; this interaction mediates U75 incorporation to virions. Phosphorylated. Post-translationally, palmitoylation is necessary for Golgi localization.

The protein localises to the virion tegument. Its subcellular location is the host cytoplasm. The protein resides in the host Golgi apparatus. In terms of biological role, plays several roles during the time course of infection, including egress of virus particles from the perinuclear space and secondary envelopment of cytoplasmic capsids that bud into specific trans-Golgi network (TGN)-derived membranes. The sequence is that of Tegument protein UL51 homolog (U44) from Homo sapiens (Human).